A 65-amino-acid polypeptide reads, in one-letter code: Large ribosomal subunit protein bL35 (65 aa).

The protein belongs to the bacterial ribosomal protein bL35 family.

In Magnetococcus marinus (strain ATCC BAA-1437 / JCM 17883 / MC-1), this protein is Large ribosomal subunit protein bL35.